A 959-amino-acid polypeptide reads, in one-letter code: Vacuolar membrane protease (959 aa).

Residues 1-13 lie on the Cytoplasmic side of the membrane; that stretch reads MARLNPLSFTPGP. A helical membrane pass occupies residues 14-34; that stretch reads VIFFTCAVYIALFAALLTVHL. Topologically, residues 35–378 are vacuolar; it reads RVPDYPSKTP…KVFVVFQLHT (344 aa). 3 N-linked (GlcNAc...) asparagine glycosylation sites follow: Asn48, Asn102, and Asn105. The segment at 128-149 is disordered; that stretch reads GSEDDEPYHSPQSSPPGERRLD. 2 residues coordinate Zn(2+): His158 and Asp170. Residue Glu204 is the Proton acceptor of the active site. Residues Glu205, Glu230, and His303 each coordinate Zn(2+). A helical transmembrane segment spans residues 379-399; the sequence is MFALCVTLLVVAPLFLIGLTF. Over 400–432 the chain is Cytoplasmic; the sequence is GLSKADKNYLFARKAYMYSSDDDHPVHLYGWRG. Residues 433 to 453 traverse the membrane as a helical segment; the sequence is FFRFPIVFSIATAVVVGLAYL. Over 454–463 the chain is Vacuolar; that stretch reads MVRLNPLILY. The chain crosses the membrane as a helical span at residues 464 to 484; it reads SSPYAVWSMMLSAWFSVAWFF. Residues 485-498 lie on the Cytoplasmic side of the membrane; the sequence is SRGASAMRPSALQR. The chain crosses the membrane as a helical span at residues 499–519; it reads MYALIWLFAGSFALLAFVTVL. At 520-524 the chain is on the vacuolar side; that stretch reads SNNYQ. A helical membrane pass occupies residues 525-545; it reads VAGGYFALFYFAGIFLALVLS. Over 546–645 the chain is Cytoplasmic; the sequence is YLELFFAPTK…YPGEQDWSGK (100 aa). Disordered regions lie at residues 566-594 and 606-635; these read DEPVSRPLTGTTTAARSEEPPIADDDATE and FARHSGRRDSIDDENGNRDEEPVQLDLKQP. A compositionally biased stretch (basic and acidic residues) spans 612 to 626; that stretch reads RRDSIDDENGNRDEE. A helical membrane pass occupies residues 646-666; the sequence is LPGWLWLLQLLLVAPIVVILV. The Vacuolar segment spans residues 667 to 688; it reads GQIALLLTSALHQTPADGNSSL. An N-linked (GlcNAc...) asparagine glycan is attached at Asn685. The helical transmembrane segment at 689-709 threads the bilayer; sequence FVYLAFALLTTLLLAPIGPFI. The Cytoplasmic portion of the chain corresponds to 710–716; the sequence is HRFTWHV. A helical membrane pass occupies residues 717 to 737; the sequence is PTFVFLVCVATVIYNLVAFPF. Topologically, residues 738-959 are vacuolar; it reads SREHRLKVYF…LVEGFKYFQV (222 aa). 5 N-linked (GlcNAc...) asparagine glycosylation sites follow: Asn785, Asn818, Asn834, Asn864, and Asn899.

This sequence belongs to the peptidase M28 family. Zn(2+) serves as cofactor.

Its subcellular location is the vacuole membrane. Its function is as follows. May be involved in vacuolar sorting and osmoregulation. In Phaeosphaeria nodorum (strain SN15 / ATCC MYA-4574 / FGSC 10173) (Glume blotch fungus), this protein is Vacuolar membrane protease.